A 225-amino-acid chain; its full sequence is NAD(P)H-quinone oxidoreductase subunit K, chloroplastic (225 aa).

[4Fe-4S] cluster-binding residues include Cys43, Cys44, Cys108, and Cys139.

The protein belongs to the complex I 20 kDa subunit family. NDH is composed of at least 16 different subunits, 5 of which are encoded in the nucleus. [4Fe-4S] cluster is required as a cofactor.

It localises to the plastid. The protein localises to the chloroplast thylakoid membrane. It carries out the reaction a plastoquinone + NADH + (n+1) H(+)(in) = a plastoquinol + NAD(+) + n H(+)(out). It catalyses the reaction a plastoquinone + NADPH + (n+1) H(+)(in) = a plastoquinol + NADP(+) + n H(+)(out). Its function is as follows. NDH shuttles electrons from NAD(P)H:plastoquinone, via FMN and iron-sulfur (Fe-S) centers, to quinones in the photosynthetic chain and possibly in a chloroplast respiratory chain. The immediate electron acceptor for the enzyme in this species is believed to be plastoquinone. Couples the redox reaction to proton translocation, and thus conserves the redox energy in a proton gradient. This Eucalyptus globulus subsp. globulus (Tasmanian blue gum) protein is NAD(P)H-quinone oxidoreductase subunit K, chloroplastic.